The chain runs to 88 residues: MAQKTFKVTADSGIHARPATVLVQTASKYDADVNLEYNGKTVNLKSIMGVMSLGIAKGAEITISASGADENDALNALEETMKSEGLGE.

In terms of domain architecture, HPr spans 2-88 (AQKTFKVTAD…ETMKSEGLGE (87 aa)). At S12 the chain carries Phosphoserine. The active-site Pros-phosphohistidine intermediate; alternate is the H15. A Tele-phosphohistidine; alternate modification is found at H15. S46 is modified (phosphoserine; by HPrK/P).

This sequence belongs to the HPr family. Phosphorylated during sporulation.

The protein resides in the cytoplasm. With respect to regulation, phosphorylation on Ser-46 inhibits the phosphoryl transfer from enzyme I to HPr. In terms of biological role, general (non sugar-specific) component of the phosphoenolpyruvate-dependent sugar phosphotransferase system (sugar PTS). This major carbohydrate active-transport system catalyzes the phosphorylation of incoming sugar substrates concomitantly with their translocation across the cell membrane. The phosphoryl group from phosphoenolpyruvate (PEP) is transferred to the phosphoryl carrier protein HPr by enzyme I. Phospho-HPr then transfers it to the PTS EIIA domain. Functionally, P-Ser-HPr interacts with the catabolite control protein A (CcpA), forming a complex that binds to DNA at the catabolite response elements cre, operator sites preceding a large number of catabolite-regulated genes. Thus, P-Ser-HPr is a corepressor in carbon catabolite repression (CCR), a mechanism that allows bacteria to coordinate and optimize the utilization of available carbon sources. P-Ser-HPr also plays a role in inducer exclusion, in which it probably interacts with several non-PTS permeases and inhibits their transport activity. This Bacillus subtilis (strain 168) protein is Phosphocarrier protein HPr (ptsH).